A 217-amino-acid chain; its full sequence is Ribonuclease T (217 aa).

The 176-residue stretch at 20-195 folds into the Exonuclease domain; that stretch reads VVVDVETAGF…YDTEKTAELF (176 aa). Positions 23, 25, 182, and 187 each coordinate Mg(2+). The active-site Proton donor/acceptor is histidine 182.

This sequence belongs to the RNase T family. As to quaternary structure, homodimer. The cofactor is Mg(2+).

Trims short 3' overhangs of a variety of RNA species, leaving a one or two nucleotide 3' overhang. Responsible for the end-turnover of tRNA: specifically removes the terminal AMP residue from uncharged tRNA (tRNA-C-C-A). Also appears to be involved in tRNA biosynthesis. This is Ribonuclease T from Vibrio vulnificus (strain YJ016).